The following is a 45-amino-acid chain: Large ribosomal subunit protein bL34 (45 aa).

Belongs to the bacterial ribosomal protein bL34 family.

The protein is Large ribosomal subunit protein bL34 of Arthrobacter sp. (strain FB24).